A 324-amino-acid chain; its full sequence is MAAIEDSPTFSSVVTPAAFEIGSLPTTEIPVDPVENDSTAPPKPVRITCPTVAGTYPVVLFFHGFYLRNYFYSDVLNHIASHGYILVAPQLCKLLPPGGQVEVDDAGSVINWASENLKAHLPTSVNANGKYTSLVGHSRGGKTAFAVALGHAATLDPSITFSALIGIDPVAGTNKYIRTDPHILTYKPESFELDIPVAVVGTGLGPKWNNVMPPCAPTDLNHEEFYKECKATKAHFVAADYGHMDMLDDDLPGFVGFMAGCMCKNGQRKKSEMRSFVGGIVVAFLKYSLWGEKAEIRLIVKDPSVSPAKLDPSPELEEASGIFV.

The short motif at Gly-136–Gly-140 is the GXSXG element. Ser-138 functions as the Nucleophile in the catalytic mechanism. Residues Asp-168 and His-243 each act as charge relay system in the active site.

Belongs to the AB hydrolase superfamily. Lipase family. In terms of tissue distribution, expressed in seedlings, leaves, flowers and siliques, but not in roots.

The protein localises to the cytoplasm. Its subcellular location is the cytosol. The catalysed reaction is a chlorophyll + H2O = a chlorophyllide + phytol + H(+). It catalyses the reaction chlorophyll a + H2O = phytol + chlorophyllide a + H(+). Its pathway is porphyrin-containing compound metabolism; chlorophyll degradation. In terms of biological role, catalyzes the hydrolysis of ester bond in chlorophyll to yield chlorophyllide and phytol. Shows a preferential activity toward chlorophyll a. Does not seem to be required for chlorophyll degradation during senescence. May modulate the balance between different plant defense pathways. This chain is Chlorophyllase-1, found in Arabidopsis thaliana (Mouse-ear cress).